The chain runs to 301 residues: uncharacterized protein (301 aa).

Belongs to the asfivirus E301R family. Interacts with host IRF3.

Plays a role in the inhibition of host innate immune system by acting as a negatively regulator of type I interferon production. Mechanistically, interacts with and prevents host IRF3 nuclear localization to inhibit its transcriptional activity. This is an uncharacterized protein from African swine fever virus (isolate Warthog/Namibia/Wart80/1980) (ASFV).